Here is a 156-residue protein sequence, read N- to C-terminus: Ribosomal RNA large subunit methyltransferase H (156 aa).

Residues Leu73, Gly104, and 123 to 128 contribute to the S-adenosyl-L-methionine site; that span reads LSPLTL.

The protein belongs to the RNA methyltransferase RlmH family. In terms of assembly, homodimer.

The protein resides in the cytoplasm. It catalyses the reaction pseudouridine(1915) in 23S rRNA + S-adenosyl-L-methionine = N(3)-methylpseudouridine(1915) in 23S rRNA + S-adenosyl-L-homocysteine + H(+). Functionally, specifically methylates the pseudouridine at position 1915 (m3Psi1915) in 23S rRNA. This is Ribosomal RNA large subunit methyltransferase H from Aliivibrio fischeri (strain ATCC 700601 / ES114) (Vibrio fischeri).